Consider the following 79-residue polypeptide: Small ribosomal subunit protein uS17 (79 aa).

The protein belongs to the universal ribosomal protein uS17 family. Part of the 30S ribosomal subunit.

In terms of biological role, one of the primary rRNA binding proteins, it binds specifically to the 5'-end of 16S ribosomal RNA. This Bartonella tribocorum (strain CIP 105476 / IBS 506) protein is Small ribosomal subunit protein uS17.